The sequence spans 270 residues: Aliphatic sulfonates import ATP-binding protein SsuB (270 aa).

One can recognise an ABC transporter domain in the interval 17–238; it reads LASKGLRKTF…ARGSHRLAAL (222 aa). An ATP-binding site is contributed by 49 to 56; that stretch reads GRSGCGKS. The disordered stretch occupies residues 248-270; that stretch reads STPGTAPEPDPVAPLPTQLRWAH.

It belongs to the ABC transporter superfamily. Aliphatic sulfonates importer (TC 3.A.1.17.2) family. As to quaternary structure, the complex is composed of two ATP-binding proteins (SsuB), two transmembrane proteins (SsuC) and a solute-binding protein (SsuA).

It is found in the cell inner membrane. It carries out the reaction ATP + H2O + aliphatic sulfonate-[sulfonate-binding protein]Side 1 = ADP + phosphate + aliphatic sulfonateSide 2 + [sulfonate-binding protein]Side 1.. Its function is as follows. Part of the ABC transporter complex SsuABC involved in aliphatic sulfonates import. Responsible for energy coupling to the transport system. The polypeptide is Aliphatic sulfonates import ATP-binding protein SsuB (Pseudomonas putida (strain ATCC 47054 / DSM 6125 / CFBP 8728 / NCIMB 11950 / KT2440)).